Consider the following 151-residue polypeptide: Thymosin beta (151 aa).

4 repeat units span residues 24–29 (LKKVET), 62–67 (LHSTPV), 100–105 (LKKTET), and 134–139 (LHHVET). Positions 24–139 (LKKVETTEKN…DKSALHHVET (116 aa)) are 4 X 6 AA repeat of L-[KH]-[KSH]-[VT]-[EP]-[TV].

This sequence belongs to the thymosin beta family. Interacts (via repeats 1, 2 and 4) with G-actin in a 1:3 ratio. Interacts (via repeats 2 and 3) with F-actin. As to expression, at the comma stage, enriched in the developing nerve ring (at protein level). Ubiquitously expressed in larvae and adults with enrichment in the spermatheca, the intestinal tract and the posterior bulb of the pharynx (at protein level). Expressed in oocytes and in the gonad (at protein level).

The protein resides in the cytoplasm. It localises to the cell cortex. Its subcellular location is the cell junction. It is found in the cytoskeleton. In terms of biological role, plays an important role in the organization of the cytoskeleton by regulating actin polymerization in two ways. Firstly, by binding to and sequestering actin monomers (G actin) inhibits actin polymerization. Secondly, by binding directly filamentous actin (F actin) promotes actin polymerization. Regulates the formation of cortical actin in oocytes conferring them enough rigidity to sustain the contractions during ovulation. The protein is Thymosin beta of Caenorhabditis elegans.